The following is a 314-amino-acid chain: Fibrinogen-like protein 1 (314 aa).

The N-terminal stretch at 1 to 22 (MGKIYSFVLVAIALMMGREGWA) is a signal peptide. The stretch at 28 to 62 (CLREQVRLRAQVHQLETRVKQQQTMIAQLLHEKEV) forms a coiled coil. Residues 76 to 308 (LGGKRQYADC…SVVMKIRPSD (233 aa)) enclose the Fibrinogen C-terminal domain. 2 disulfides stabilise this stretch: cysteine 85/cysteine 114 and cysteine 250/cysteine 263.

As to quaternary structure, homodimer. Interacts (via the Fibrinogen C-terminal domain) with LAG3 (via Ig-like domains 1 and 2). Mainly expressed in liver. Also expressed in brown adipose tissue.

The protein localises to the secreted. Its function is as follows. Immune suppressive molecule that inhibits antigen-specific T-cell activation by acting as a major ligand of LAG3. Responsible for LAG3 T-cell inhibitory function. Binds LAG3 independently from MHC class II (MHC-II). Secreted by, and promotes growth of, hepatocytes. This chain is Fibrinogen-like protein 1 (Fgl1), found in Mus musculus (Mouse).